Reading from the N-terminus, the 31-residue chain is Conotoxin Cltx-2 (31 aa).

Residues Pro-6 and Pro-31 each carry the 4-hydroxyproline modification.

In terms of processing, contains 4 disulfide bonds. In terms of tissue distribution, expressed by the venom duct.

The protein localises to the secreted. The sequence is that of Conotoxin Cltx-2 from Californiconus californicus (California cone).